We begin with the raw amino-acid sequence, 355 residues long: Isopentenyl-diphosphate delta-isomerase (355 aa).

A substrate-binding site is contributed by 6–7; sequence RK. FMN is bound by residues 62 to 64, serine 93, and asparagine 122; that span reads AMT. Glutamine 152 is a binding site for substrate. Glutamate 153 contributes to the Mg(2+) binding site. FMN is bound by residues lysine 184, threonine 214, 258-259, and 280-281; these read GG and AG.

Belongs to the IPP isomerase type 2 family. In terms of assembly, homooctamer. Dimer of tetramers. Requires FMN as cofactor. It depends on NADPH as a cofactor. The cofactor is Mg(2+).

The protein resides in the cytoplasm. It catalyses the reaction isopentenyl diphosphate = dimethylallyl diphosphate. Functionally, involved in the biosynthesis of isoprenoids. Catalyzes the 1,3-allylic rearrangement of the homoallylic substrate isopentenyl (IPP) to its allylic isomer, dimethylallyl diphosphate (DMAPP). This chain is Isopentenyl-diphosphate delta-isomerase, found in Bacillus pumilus (strain SAFR-032).